A 239-amino-acid polypeptide reads, in one-letter code: Probable 2-phosphosulfolactate phosphatase (239 aa).

The protein belongs to the ComB family. Mg(2+) is required as a cofactor.

The catalysed reaction is (2R)-O-phospho-3-sulfolactate + H2O = (2R)-3-sulfolactate + phosphate. In Clostridium botulinum (strain Okra / Type B1), this protein is Probable 2-phosphosulfolactate phosphatase.